The primary structure comprises 615 residues: Sodium-dependent dopamine transporter (615 aa).

Positions 1-39 are disordered; sequence MQLVPTDDPDEKIGRTSNGMQNATLPIDGPVNTEPKDPA. Topologically, residues 1-46 are cytoplasmic; sequence MQLVPTDDPDEKIGRTSNGMQNATLPIDGPVNTEPKDPAREQWSGK. Polar residues predominate over residues 15-24; it reads RTSNGMQNAT. A helical transmembrane segment spans residues 47–72; it reads LDFLLSVVGFAVDLGNIWRFPYLCFK. Na(+) contacts are provided by glycine 55, alanine 57, valine 58, and asparagine 62. Residues 73–76 are Extracellular-facing; it reads NGGG. The helical transmembrane segment at 77-100 threads the bilayer; it reads VFLIPYSIMVLLTGVPLFYMELCL. Residues 101-120 lie on the Cytoplasmic side of the membrane; the sequence is GQYYRKGAITTWGRICPLFK. Residues 121–151 traverse the membrane as a helical segment; that stretch reads GIGYCVILTAFYVDFFYNVILAWGLHYLYTS. The Extracellular portion of the chain corresponds to 152 to 229; it reads FSFNLPWASC…IRSVTDLGNV (78 aa). Cysteines 161 and 170 form a disulfide. Residues asparagine 162 and asparagine 187 are each glycosylated (N-linked (GlcNAc...) asparagine). Residues 230–250 traverse the membrane as a helical segment; the sequence is RWDIALSLFVVYLICYFSMWK. The Cytoplasmic segment spans residues 251–253; that stretch reads GIH. The chain crosses the membrane as a helical span at residues 254 to 278; sequence TSGKVVWFTALFPYVVLGILFIRGV. The Extracellular segment spans residues 279 to 302; sequence TLPGWQNGIEYYLRPNFEMLKRPS. A helical membrane pass occupies residues 303-328; that stretch reads VWQDAATQVFFSLGPGFGVLMAYSSY. Residue serine 314 participates in Na(+) binding. The Cytoplasmic segment spans residues 329 to 334; it reads NDFHNN. The helical transmembrane segment at 335-358 threads the bilayer; the sequence is VYVDALFTSFINCATSFLSGFVIF. Position 346 (asparagine 346) interacts with Na(+). The Extracellular segment spans residues 359–398; the sequence is SVLGYMSCKSGKPIEAVAQEGPGLVFVVYPEALSTMPYAP. Residues 399–424 form a helical membrane-spanning segment; it reads FWSVLFFLMLMTLGLDSSFGGSEAII. Leucine 411, aspartate 414, and serine 415 together coordinate Na(+). The Cytoplasmic portion of the chain corresponds to 425–439; sequence TGLSDEFPILKKNRE. A helical membrane pass occupies residues 440–460; that stretch reads VFVGCLFAFYMVIGIAMCTEG. A topological domain (extracellular) is located at residue glycine 461. A helical transmembrane segment spans residues 462-488; the sequence is ILIMEWLIIYGTTWGLLIAVFCEAMVI. Residues 489–518 lie on the Cytoplasmic side of the membrane; sequence AYIYGLRQFVHDVKEMMGFRPGNYWKFCWS. The helical transmembrane segment at 519–541 threads the bilayer; sequence CAAPFILLSMITSNFINYQALTY. The Extracellular segment spans residues 542-544; sequence QDY. A helical membrane pass occupies residues 545 to 565; it reads TYPTAANVIGIIFALSGASFI. Residues 566–615 lie on the Cytoplasmic side of the membrane; sequence PLVGIYKFVNARGNTISEKWQRVTMPYRKRPNQTEYIPIPTTQPHSDIML.

This sequence belongs to the sodium:neurotransmitter symporter (SNF) (TC 2.A.22) family.

It is found in the cell membrane. Functionally, dopamine transporter. Terminates the action of dopamine by its high affinity sodium-dependent reuptake into presynaptic terminals. Plays a role in the learned avoidance behavior of animals exposed to food that induces mitochondrial stress. The sequence is that of Sodium-dependent dopamine transporter from Caenorhabditis elegans.